We begin with the raw amino-acid sequence, 311 residues long: Methionyl-tRNA formyltransferase (311 aa).

A (6S)-5,6,7,8-tetrahydrofolate-binding site is contributed by 110–113 (SLLP).

This sequence belongs to the Fmt family.

It carries out the reaction L-methionyl-tRNA(fMet) + (6R)-10-formyltetrahydrofolate = N-formyl-L-methionyl-tRNA(fMet) + (6S)-5,6,7,8-tetrahydrofolate + H(+). Functionally, attaches a formyl group to the free amino group of methionyl-tRNA(fMet). The formyl group appears to play a dual role in the initiator identity of N-formylmethionyl-tRNA by promoting its recognition by IF2 and preventing the misappropriation of this tRNA by the elongation apparatus. The protein is Methionyl-tRNA formyltransferase of Streptococcus pyogenes serotype M1.